We begin with the raw amino-acid sequence, 380 residues long: Cytochrome b (380 aa).

A run of 4 helical transmembrane segments spans residues 34–54, 78–99, 114–134, and 179–199; these read FGSL…LLAM, WLIR…FLHI, WNTG…GYVL, and FFAL…IHLT. Heme b is bound by residues His84 and His98. Positions 183 and 197 each coordinate heme b. His202 serves as a coordination point for a ubiquinone. The next 4 helical transmembrane spans lie at 227–247, 289–309, 321–341, and 348–368; these read LKDI…ALFS, LGGV…PFLH, LSQI…WIGS, and FIII…ILFP.

Belongs to the cytochrome b family. The cytochrome bc1 complex contains 11 subunits: 3 respiratory subunits (MT-CYB, CYC1 and UQCRFS1), 2 core proteins (UQCRC1 and UQCRC2) and 6 low-molecular weight proteins (UQCRH/QCR6, UQCRB/QCR7, UQCRQ/QCR8, UQCR10/QCR9, UQCR11/QCR10 and a cleavage product of UQCRFS1). This cytochrome bc1 complex then forms a dimer. The cofactor is heme b.

It is found in the mitochondrion inner membrane. In terms of biological role, component of the ubiquinol-cytochrome c reductase complex (complex III or cytochrome b-c1 complex) that is part of the mitochondrial respiratory chain. The b-c1 complex mediates electron transfer from ubiquinol to cytochrome c. Contributes to the generation of a proton gradient across the mitochondrial membrane that is then used for ATP synthesis. The sequence is that of Cytochrome b (MT-CYB) from Polyplectron bicalcaratum (Grey peacock-pheasant).